Here is a 20-residue protein sequence, read N- to C-terminus: L-amino-acid oxidase L2 (20 aa).

It belongs to the flavin monoamine oxidase family. FIG1 subfamily. As to quaternary structure, monomer. This is in contrast with most of its orthologs, that are non-covalently linked homodimers. Requires FAD as cofactor. In terms of processing, N-glycosylated. In terms of tissue distribution, expressed by the venom gland.

Its subcellular location is the secreted. It catalyses the reaction an L-alpha-amino acid + O2 + H2O = a 2-oxocarboxylate + H2O2 + NH4(+). The catalysed reaction is L-leucine + O2 + H2O = 4-methyl-2-oxopentanoate + H2O2 + NH4(+). The enzyme catalyses L-phenylalanine + O2 + H2O = 3-phenylpyruvate + H2O2 + NH4(+). It carries out the reaction L-tryptophan + O2 + H2O = indole-3-pyruvate + H2O2 + NH4(+). It catalyses the reaction L-methionine + O2 + H2O = 4-methylsulfanyl-2-oxobutanoate + H2O2 + NH4(+). The catalysed reaction is L-isoleucine + O2 + H2O = (S)-3-methyl-2-oxopentanoate + H2O2 + NH4(+). The enzyme catalyses L-tyrosine + O2 + H2O = 3-(4-hydroxyphenyl)pyruvate + H2O2 + NH4(+). Functionally, catalyzes an oxidative deamination of predominantly hydrophobic and aromatic L-amino acids, thus producing hydrogen peroxide that may contribute to the diverse toxic effects of this enzyme. Is active on L-Ile, L-Leu, L-Met, L-Phe, L-Trp, and L-Tyr. Exhibits diverse biological activities, such as hemorrhage, hemolysis, edema, apoptosis of vascular endothelial cells or tumor cell lines, antibacterial and antiparasitic activities, as well as regulation of platelet aggregation. Its effect on platelets is controversial, since it either induces aggregation or inhibits agonist-induced aggregation. These different effects are probably due to different experimental conditions. The sequence is that of L-amino-acid oxidase L2 from Daboia russelii (Russel's viper).